A 327-amino-acid chain; its full sequence is GMP reductase (327 aa).

Catalysis depends on cysteine 175, which acts as the Thioimidate intermediate. 204–227 contributes to the NADP(+) binding site; that stretch reads IIADGGIRTHGDVAKSIRFGATMV.

This sequence belongs to the IMPDH/GMPR family. GuaC type 2 subfamily.

The enzyme catalyses IMP + NH4(+) + NADP(+) = GMP + NADPH + 2 H(+). In terms of biological role, catalyzes the irreversible NADPH-dependent deamination of GMP to IMP. It functions in the conversion of nucleobase, nucleoside and nucleotide derivatives of G to A nucleotides, and in maintaining the intracellular balance of A and G nucleotides. This is GMP reductase from Bacillus thuringiensis subsp. konkukian (strain 97-27).